A 282-amino-acid polypeptide reads, in one-letter code: MIYETAPAKINFTLDTLFKRNDGYHEIEMIMTTVDLNDRLTFHKRKDRKIVVEIEHNYVPSNHKNLAYRAAQLFIEQYQLKQGVTISIDKEIPVSAGLAGGSADAAATLRGLNRLFDIGASLEELAQLGSKIGTDIPFCIYNKTALCTGRGEKIEFLNKPPSAWVILAKPNLGISSPDIFKLINLDKRYDVHTKMCYEALENRDYQQLCQSLSNRLEPISVSKHPQIDKLKNNMLKSGADGALMSGSGPTVYGLARKESQAKNIYNAVNGCCNEVYLVRLLG.

Residue lysine 9 is part of the active site. 93–103 (PVSAGLAGGSA) provides a ligand contact to ATP. Aspartate 135 is an active-site residue.

It belongs to the GHMP kinase family. IspE subfamily.

It carries out the reaction 4-CDP-2-C-methyl-D-erythritol + ATP = 4-CDP-2-C-methyl-D-erythritol 2-phosphate + ADP + H(+). Its function is as follows. Catalyzes the phosphorylation of the position 2 hydroxy group of 4-diphosphocytidyl-2C-methyl-D-erythritol. The chain is Putative 4-diphosphocytidyl-2-C-methyl-D-erythritol kinase from Staphylococcus aureus (strain bovine RF122 / ET3-1).